We begin with the raw amino-acid sequence, 223 residues long: Phosphoribosylformylglycinamidine synthase subunit PurQ (223 aa).

In terms of domain architecture, Glutamine amidotransferase type-1 spans 3-223 (FAVLVFPGSN…MVKSWREQHV (221 aa)). The Nucleophile role is filled by C85. Residues H193 and E195 contribute to the active site.

In terms of assembly, part of the FGAM synthase complex composed of 1 PurL, 1 PurQ and 2 PurS subunits.

The protein resides in the cytoplasm. It carries out the reaction N(2)-formyl-N(1)-(5-phospho-beta-D-ribosyl)glycinamide + L-glutamine + ATP + H2O = 2-formamido-N(1)-(5-O-phospho-beta-D-ribosyl)acetamidine + L-glutamate + ADP + phosphate + H(+). The catalysed reaction is L-glutamine + H2O = L-glutamate + NH4(+). The protein operates within purine metabolism; IMP biosynthesis via de novo pathway; 5-amino-1-(5-phospho-D-ribosyl)imidazole from N(2)-formyl-N(1)-(5-phospho-D-ribosyl)glycinamide: step 1/2. In terms of biological role, part of the phosphoribosylformylglycinamidine synthase complex involved in the purines biosynthetic pathway. Catalyzes the ATP-dependent conversion of formylglycinamide ribonucleotide (FGAR) and glutamine to yield formylglycinamidine ribonucleotide (FGAM) and glutamate. The FGAM synthase complex is composed of three subunits. PurQ produces an ammonia molecule by converting glutamine to glutamate. PurL transfers the ammonia molecule to FGAR to form FGAM in an ATP-dependent manner. PurS interacts with PurQ and PurL and is thought to assist in the transfer of the ammonia molecule from PurQ to PurL. The sequence is that of Phosphoribosylformylglycinamidine synthase subunit PurQ from Staphylococcus aureus (strain MSSA476).